Here is a 142-residue protein sequence, read N- to C-terminus: Protein archease (142 aa).

Asp-12 and Asp-141 together coordinate Ca(2+).

This sequence belongs to the archease family.

In terms of biological role, activates the tRNA-splicing ligase complex by facilitating the enzymatic turnover of catalytic subunit RtcB. Acts by promoting the guanylylation of RtcB, a key intermediate step in tRNA ligation. Can also alter the NTP specificity of RtcB such that ATP, dGTP or ITP is used efficiently. The polypeptide is Protein archease (Thermococcus kodakarensis (strain ATCC BAA-918 / JCM 12380 / KOD1) (Pyrococcus kodakaraensis (strain KOD1))).